A 140-amino-acid chain; its full sequence is FAD synthase (140 aa).

Residues 9–10 (TF), 14–17 (HPGH), N92, and Y119 each bind ATP.

The protein belongs to the archaeal FAD synthase family. Homodimer. Requires a divalent metal cation as cofactor.

The catalysed reaction is FMN + ATP + H(+) = FAD + diphosphate. It functions in the pathway cofactor biosynthesis; FAD biosynthesis; FAD from FMN: step 1/1. Catalyzes the transfer of the AMP portion of ATP to flavin mononucleotide (FMN) to produce flavin adenine dinucleotide (FAD) coenzyme. The polypeptide is FAD synthase (Methanocorpusculum labreanum (strain ATCC 43576 / DSM 4855 / Z)).